The chain runs to 440 residues: Chromosome partition protein MukF (440 aa).

Positions 208 to 236 (LSETSGTLRELQDTLEAAGDKLQANLLRI) are leucine-zipper.

Belongs to the MukF family. Interacts, and probably forms a ternary complex, with MukE and MukB via its C-terminal region. The complex formation is stimulated by calcium or magnesium. It is required for an interaction between MukE and MukB.

The protein localises to the cytoplasm. The protein resides in the nucleoid. Functionally, involved in chromosome condensation, segregation and cell cycle progression. May participate in facilitating chromosome segregation by condensation DNA from both sides of a centrally located replisome during cell division. Not required for mini-F plasmid partitioning. Probably acts via its interaction with MukB and MukE. Overexpression results in anucleate cells. It has a calcium binding activity. The sequence is that of Chromosome partition protein MukF from Serratia proteamaculans (strain 568).